Consider the following 327-residue polypeptide: Gonadotropin-releasing hormone receptor (327 aa).

Over 1 to 38 (MANNASLEQDQNHCSAINNSIPLTQGKLPTLTLSGKIR) the chain is Extracellular. 2 N-linked (GlcNAc...) asparagine glycosylation sites follow: Asn4 and Asn18. Residues 39-58 (VTVTFFLFLLSTAFNASFLV) form a helical membrane-spanning segment. Topologically, residues 59–77 (KLQRWTQKRKKGKKLSRMK) are cytoplasmic. A helical transmembrane segment spans residues 78 to 97 (VLLKHLTLANLLETLIVMPL). At 98–115 (DGMWNITVQWYAGEFLCK) the chain is on the extracellular side. N-linked (GlcNAc...) asparagine glycosylation occurs at Asn102. Cys114 and Cys195 are oxidised to a cystine. A helical membrane pass occupies residues 116 to 137 (VLSYLKLFSMYAPAFMMVVISL). Residues 138–164 (DRSLAVTQPLAVQSKSKLERSMTSLAW) lie on the Cytoplasmic side of the membrane. Residues 165–184 (ILSIVFAGPQLYIFRMIYLA) traverse the membrane as a helical segment. The Extracellular portion of the chain corresponds to 185-211 (DGSGPAVFSQCVTHCSFPQWWHEAFYN). A helical membrane pass occupies residues 212–231 (FFTFSCLFIIPLLIMLICNA). Topologically, residues 232 to 280 (KIIFALTRVLHQDPRKLQLNQSKNNIPRARLRTLKMTVAFGTSFVICWT) are cytoplasmic. A helical membrane pass occupies residues 281–299 (PYYVLGIWYWFDPEMLNRV). Residues 300 to 305 (SEPVNH) lie on the Extracellular side of the membrane. Residues 306–325 (FFFLFAFLNPCFDPLIYGYF) traverse the membrane as a helical segment. The Cytoplasmic portion of the chain corresponds to 326–327 (SL).

It belongs to the G-protein coupled receptor 1 family.

It localises to the cell membrane. Functionally, receptor for gonadotropin releasing hormone (GnRH) that mediates the action of GnRH to stimulate the secretion of the gonadotropic hormones luteinizing hormone (LH) and follicle-stimulating hormone (FSH). This receptor mediates its action by association with G-proteins that activate a phosphatidylinositol-calcium second messenger system. The sequence is that of Gonadotropin-releasing hormone receptor (Gnrhr) from Rattus norvegicus (Rat).